The chain runs to 370 residues: NSFL1 cofactor p47 (370 aa).

Residues 54–73 (SQATPSSVSRGTAPSDNRVT) are disordered. Phosphoserine occurs at positions 74, 102, and 114. 2 disordered regions span residues 80-116 (HDQD…RSPN) and 137-157 (VTKS…GYRL). Residues 109–115 (PPRKRSP) carry the Nuclear localization signal motif. Ser-140 bears the Phosphoserine; by CDK1 mark. Tyr-167 is subject to Phosphotyrosine. The Nuclear localization signal motif lies at 172 to 175 (RRRH). Phosphoserine is present on residues Ser-176, Ser-192, and Ser-272. The SEP domain occupies 179–244 (DVHVVLKLWK…MEDHRDEDFV (66 aa)). Residues 272–292 (SPAQQAENEAKASSSISIDES) are disordered. Positions 291 to 368 (ESQPTTNIQI…NLLNAVIVQR (78 aa)) constitute a UBX domain.

In terms of assembly, part of a ternary complex containing STX5A, NSFL1C and VCP. NSFL1C forms a homotrimer that binds to one end of a VCP homohexamer. The complex binds to membranes enriched in phosphatidylethanolamine-containing lipids and promotes Golgi membrane fusion. Interaction with VCIP135 leads to dissociation of the complex via ATP hydrolysis by VCP. Binds ubiquitin and mono-ubiquitinated proteins via its N-terminal UBA-like domain when bound to VCP. Post-translationally, phosphorylated during mitosis. Phosphorylation inhibits interaction with Golgi membranes and is required for the fragmentation of the Golgi stacks during mitosis.

It is found in the nucleus. It localises to the golgi apparatus. The protein resides in the golgi stack. The protein localises to the chromosome. Its subcellular location is the cytoplasm. It is found in the cytoskeleton. It localises to the microtubule organizing center. The protein resides in the centrosome. In terms of biological role, reduces the ATPase activity of VCP. Necessary for the fragmentation of Golgi stacks during mitosis and for VCP-mediated reassembly of Golgi stacks after mitosis. May play a role in VCP-mediated formation of transitional endoplasmic reticulum (tER). Inhibits the activity of CTSL (in vitro). Together with UBXN2B/p37, regulates the centrosomal levels of kinase AURKA/Aurora A during mitotic progression by promoting AURKA removal from centrosomes in prophase. Also, regulates spindle orientation during mitosis. This is NSFL1 cofactor p47 (NSFL1C) from Bos taurus (Bovine).